Reading from the N-terminus, the 332-residue chain is MTKITVFGMGSFGTALANVLAENGHDVLMWGKNQDAVDELNTCHTNKKYLKYAKLDVNIIATSDMTKAIQFADIYLMALPTKAMREVATQINDKLTSKKTFIHVAKGIENGTFKRVSEMIEDSISPEYNAGIGVLSGPSHAEEVVVKQPTTVAASSKDKSVSKLTQDLFMNDYLRVYTNDDLIGVELGGALKNIIAVASGIVAGIGYGDNAKAALMTRGLAEISRLGEKLGADPMTFLGLGGIGDLIVTCISTHSRNFTLGYKLGQGESMDQALSEMNMVVEGIYTTKSVYHLAKEKNVDMPITNALYRVLFENISVKECVKDLMERDKKSE.

NADPH is bound by residues serine 11, phenylalanine 12, lysine 32, and lysine 106. Positions 106, 137, and 139 each coordinate sn-glycerol 3-phosphate. Alanine 141 is a binding site for NADPH. Sn-glycerol 3-phosphate-binding residues include lysine 192, aspartate 245, serine 255, arginine 256, and asparagine 257. Catalysis depends on lysine 192, which acts as the Proton acceptor. Arginine 256 contacts NADPH. Valine 280 and glutamate 282 together coordinate NADPH.

The protein belongs to the NAD-dependent glycerol-3-phosphate dehydrogenase family.

The protein resides in the cytoplasm. The catalysed reaction is sn-glycerol 3-phosphate + NAD(+) = dihydroxyacetone phosphate + NADH + H(+). It catalyses the reaction sn-glycerol 3-phosphate + NADP(+) = dihydroxyacetone phosphate + NADPH + H(+). Its pathway is membrane lipid metabolism; glycerophospholipid metabolism. Its function is as follows. Catalyzes the reduction of the glycolytic intermediate dihydroxyacetone phosphate (DHAP) to sn-glycerol 3-phosphate (G3P), the key precursor for phospholipid synthesis. This is Glycerol-3-phosphate dehydrogenase [NAD(P)+] from Staphylococcus aureus (strain Mu3 / ATCC 700698).